The primary structure comprises 186 residues: Acireductone dioxygenase (186 aa).

The segment at 1-21 is disordered; it reads MSRLSIFPDGSTSMDQSSPTP. The span at 10-20 shows a compositional bias: polar residues; that stretch reads GSTSMDQSSPT. The Fe(2+) site is built by His-103, His-105, Glu-109, and His-147. Positions 103, 105, 109, and 147 each coordinate Ni(2+).

It belongs to the acireductone dioxygenase (ARD) family. Monomer. Requires Fe(2+) as cofactor. The cofactor is Ni(2+).

The enzyme catalyses 1,2-dihydroxy-5-(methylsulfanyl)pent-1-en-3-one + O2 = 3-(methylsulfanyl)propanoate + CO + formate + 2 H(+). The catalysed reaction is 1,2-dihydroxy-5-(methylsulfanyl)pent-1-en-3-one + O2 = 4-methylsulfanyl-2-oxobutanoate + formate + 2 H(+). It participates in amino-acid biosynthesis; L-methionine biosynthesis via salvage pathway; L-methionine from S-methyl-5-thio-alpha-D-ribose 1-phosphate: step 5/6. In terms of biological role, catalyzes 2 different reactions between oxygen and the acireductone 1,2-dihydroxy-3-keto-5-methylthiopentene (DHK-MTPene) depending upon the metal bound in the active site. Fe-containing acireductone dioxygenase (Fe-ARD) produces formate and 2-keto-4-methylthiobutyrate (KMTB), the alpha-ketoacid precursor of methionine in the methionine recycle pathway. Ni-containing acireductone dioxygenase (Ni-ARD) produces methylthiopropionate, carbon monoxide and formate, and does not lie on the methionine recycle pathway. This is Acireductone dioxygenase from Synechococcus sp. (strain CC9902).